We begin with the raw amino-acid sequence, 938 residues long: Isoleucine--tRNA ligase (938 aa).

A 'HIGH' region motif is present at residues 58-68 (PYANGSIHIGH). N6-acetyllysine is present on Lys183. Glu561 provides a ligand contact to L-isoleucyl-5'-AMP. Positions 602–606 (KMSKS) match the 'KMSKS' region motif. Lys605 is a binding site for ATP. Residues Cys901, Cys904, Cys921, and Cys924 each coordinate Zn(2+).

Belongs to the class-I aminoacyl-tRNA synthetase family. IleS type 1 subfamily. As to quaternary structure, monomer. It depends on Zn(2+) as a cofactor.

It localises to the cytoplasm. The enzyme catalyses tRNA(Ile) + L-isoleucine + ATP = L-isoleucyl-tRNA(Ile) + AMP + diphosphate. Functionally, catalyzes the attachment of isoleucine to tRNA(Ile). As IleRS can inadvertently accommodate and process structurally similar amino acids such as valine, to avoid such errors it has two additional distinct tRNA(Ile)-dependent editing activities. One activity is designated as 'pretransfer' editing and involves the hydrolysis of activated Val-AMP. The other activity is designated 'posttransfer' editing and involves deacylation of mischarged Val-tRNA(Ile). In Escherichia coli O6:H1 (strain CFT073 / ATCC 700928 / UPEC), this protein is Isoleucine--tRNA ligase.